The following is a 767-amino-acid chain: Probable NADP-dependent malic enzyme (767 aa).

Residues Met1–Ala430 are malic enzyme. The Proton donor role is filled by Tyr42. Lys97 acts as the Proton acceptor in catalysis. 3 residues coordinate a divalent metal cation: Glu139, Asp140, and Asp165. NADP(+)-binding positions include Ala198–Ala201, Asn290, and Asn322. Positions Asn431–Val767 are phosphate acetyltransferase.

This sequence in the N-terminal section; belongs to the malic enzymes family. The protein in the C-terminal section; belongs to the phosphate acetyltransferase and butyryltransferase family. The cofactor is Mg(2+). Mn(2+) is required as a cofactor.

It carries out the reaction (S)-malate + NADP(+) = pyruvate + CO2 + NADPH. It catalyses the reaction oxaloacetate + H(+) = pyruvate + CO2. This chain is Probable NADP-dependent malic enzyme, found in Rickettsia prowazekii (strain Madrid E).